The sequence spans 54 residues: Rubredoxin (54 aa).

The region spanning 1–54 (MKKYQCIVCGWIYDEAEGWPQDGIAPGTKWEDIPDDWTCPDCGVSKVDFEMIEV) is the Rubredoxin-like domain. Fe cation contacts are provided by Cys-6, Cys-9, Cys-39, and Cys-42.

This sequence belongs to the rubredoxin family. Fe(3+) serves as cofactor.

The protein localises to the cytoplasm. The protein operates within hydrocarbon metabolism; alkane degradation. In terms of biological role, involved in the hydrocarbon hydroxylating system, which transfers electrons from NADH to rubredoxin reductase and then through rubredoxin to alkane 1 monooxygenase. The protein is Rubredoxin (rubA) of Acinetobacter baylyi (strain ATCC 33305 / BD413 / ADP1).